The chain runs to 673 residues: Leucine zipper putative tumor suppressor 3 (673 aa).

Disordered stretches follow at residues 1–157 (MAKL…CSEP), 172–239 (FHSM…QHLA), and 251–317 (IGTA…PPSP). The segment covering 79 to 92 (SRERPGRYPSEDKG) has biased composition (basic and acidic residues). Residues 173–186 (HSMQNLCPPQTNGT) are compositionally biased toward polar residues. Residues 215–235 (GLSDSGRNSLTSLPTYSSSYS) are compositionally biased toward low complexity. Residues 258-269 (SGSGGSSGGGSG) are compositionally biased toward gly residues. A compositionally biased stretch (low complexity) spans 274-294 (GTSDSGRASSKSGSSSSMGRP). The span at 295-307 (GHLGSGEGGGGGL) shows a compositional bias: gly residues. Phosphoserine is present on residues Ser316 and Ser318. 2 coiled-coil regions span residues 317–496 (PSAL…SLRD) and 571–639 (RALR…RLRE). Residues 635–673 (RRLRERGAAGGASTPTPQHGEEKKAWTPSRLERIESTEI) form a disordered region. A compositionally biased stretch (basic and acidic residues) spans 653-673 (HGEEKKAWTPSRLERIESTEI).

Belongs to the LZTS3 family. As to quaternary structure, interacts (via C-terminus) with SHANK3 (via PDZ domain). Interacts (via coiled coil) with SIPA1L1. Can form homooligomers.

The protein localises to the synapse. Its subcellular location is the postsynaptic density. It localises to the cell projection. The protein resides in the dendritic spine. It is found in the dendrite. The protein localises to the cytoplasm. Its subcellular location is the cytoskeleton. Functionally, may be involved in promoting the maturation of dendritic spines, probably via regulating SIPA1L1 levels at the postsynaptic density of synapses. This is Leucine zipper putative tumor suppressor 3 from Homo sapiens (Human).